The primary structure comprises 175 residues: Ribosome-binding factor A (175 aa).

Residues 131–175 (KPAGEADPYRDRGSVDEPSDAGGLVIRTSDGLEAENTGDDYQAED) form a disordered region. The segment covering 162–175 (LEAENTGDDYQAED) has biased composition (acidic residues).

It belongs to the RbfA family. As to quaternary structure, monomer. Binds 30S ribosomal subunits, but not 50S ribosomal subunits or 70S ribosomes.

The protein localises to the cytoplasm. Functionally, one of several proteins that assist in the late maturation steps of the functional core of the 30S ribosomal subunit. Associates with free 30S ribosomal subunits (but not with 30S subunits that are part of 70S ribosomes or polysomes). Required for efficient processing of 16S rRNA. May interact with the 5'-terminal helix region of 16S rRNA. The sequence is that of Ribosome-binding factor A from Mycobacterium ulcerans (strain Agy99).